A 448-amino-acid polypeptide reads, in one-letter code: ATP-dependent RNA helicase sub2 (448 aa).

The segment covering 19-29 (DAAATTAAPAA) has biased composition (low complexity). The segment at 19 to 43 (DAAATTAAPAANGAQDKKGDLTVSG) is disordered. The Q motif motif lies at 58–86 (TGFRDFLLKGELLRAITDCGFEHPSEVQQ). Positions 89–271 (IPTAILNVDV…KKFMRNPLEV (183 aa)) constitute a Helicase ATP-binding domain. ATP is bound at residue 102 to 109 (AKSGLGKT). The DECD box signature appears at 211–214 (DECD). Positions 283-444 (GLQQYYIKLS…EYPEGGVDSS (162 aa)) constitute a Helicase C-terminal domain.

It belongs to the DEAD box helicase family. DECD subfamily.

It is found in the nucleus. It carries out the reaction ATP + H2O = ADP + phosphate + H(+). In terms of biological role, ATP-binding RNA helicase involved in transcription elongation and required for the export of mRNA out of the nucleus. SUB2 also plays a role in pre-mRNA splicing and spliceosome assembly. May be involved in rDNA and telomeric silencing, and maintenance of genome integrity. This is ATP-dependent RNA helicase sub2 (sub2) from Aspergillus fumigatus (strain ATCC MYA-4609 / CBS 101355 / FGSC A1100 / Af293) (Neosartorya fumigata).